The chain runs to 498 residues: Glycerol kinase (498 aa).

Threonine 12 contributes to the ADP binding site. Positions 12, 13, and 14 each coordinate ATP. Threonine 12 lines the sn-glycerol 3-phosphate pocket. ADP is bound at residue arginine 16. Sn-glycerol 3-phosphate contacts are provided by arginine 82, glutamate 83, tyrosine 134, and aspartate 241. Arginine 82, glutamate 83, tyrosine 134, aspartate 241, and glutamine 242 together coordinate glycerol. ADP is bound by residues threonine 263 and glycine 310. Residues threonine 263, glycine 310, glutamine 314, and glycine 411 each coordinate ATP. 2 residues coordinate ADP: glycine 411 and asparagine 415.

The protein belongs to the FGGY kinase family.

The enzyme catalyses glycerol + ATP = sn-glycerol 3-phosphate + ADP + H(+). The protein operates within polyol metabolism; glycerol degradation via glycerol kinase pathway; sn-glycerol 3-phosphate from glycerol: step 1/1. Its activity is regulated as follows. Inhibited by fructose 1,6-bisphosphate (FBP). Key enzyme in the regulation of glycerol uptake and metabolism. Catalyzes the phosphorylation of glycerol to yield sn-glycerol 3-phosphate. The protein is Glycerol kinase of Janthinobacterium sp. (strain Marseille) (Minibacterium massiliensis).